The sequence spans 163 residues: Cyclic pyranopterin monophosphate synthase (163 aa).

Substrate is bound by residues 74-76 and 111-112; these read MCH and ME. D126 is a catalytic residue.

Belongs to the MoaC family. In terms of assembly, homohexamer; trimer of dimers.

The enzyme catalyses (8S)-3',8-cyclo-7,8-dihydroguanosine 5'-triphosphate = cyclic pyranopterin phosphate + diphosphate. It participates in cofactor biosynthesis; molybdopterin biosynthesis. Its function is as follows. Catalyzes the conversion of (8S)-3',8-cyclo-7,8-dihydroguanosine 5'-triphosphate to cyclic pyranopterin monophosphate (cPMP). This chain is Cyclic pyranopterin monophosphate synthase, found in Desulfitobacterium hafniense (strain DSM 10664 / DCB-2).